A 215-amino-acid chain; its full sequence is Pyrrolidone-carboxylate peptidase (215 aa).

Residues Glu-80, Cys-143, and His-167 contribute to the active site.

This sequence belongs to the peptidase C15 family. As to quaternary structure, homotetramer.

It localises to the cytoplasm. The catalysed reaction is Release of an N-terminal pyroglutamyl group from a polypeptide, the second amino acid generally not being Pro.. Its function is as follows. Removes 5-oxoproline from various penultimate amino acid residues except L-proline. The sequence is that of Pyrrolidone-carboxylate peptidase from Bacillus thuringiensis (strain Al Hakam).